Consider the following 157-residue polypeptide: Small ribosomal subunit protein uS7cz/uS7cy (157 aa).

The protein belongs to the universal ribosomal protein uS7 family. In terms of assembly, part of the 30S ribosomal subunit.

The protein localises to the plastid. The protein resides in the chloroplast. One of the primary rRNA binding proteins, it binds directly to 16S rRNA where it nucleates assembly of the head domain of the 30S subunit. The protein is Small ribosomal subunit protein uS7cz/uS7cy (rps7-A) of Gnetum parvifolium (Small-leaved jointfir).